Consider the following 395-residue polypeptide: Putative nickel insertion protein (395 aa).

This sequence belongs to the LarC family.

The protein is Putative nickel insertion protein of Methanopyrus kandleri (strain AV19 / DSM 6324 / JCM 9639 / NBRC 100938).